The primary structure comprises 220 residues: Fructose-6-phosphate aldolase 2 (220 aa).

The Schiff-base intermediate with substrate role is filled by Lys-85.

Belongs to the transaldolase family. Type 3A subfamily. Homodecamer.

Its subcellular location is the cytoplasm. It carries out the reaction beta-D-fructose 6-phosphate = dihydroxyacetone + D-glyceraldehyde 3-phosphate. Functionally, catalyzes the reversible formation of fructose 6-phosphate from dihydroxyacetone and D-glyceraldehyde 3-phosphate via an aldolization reaction. This Escherichia coli O6:H1 (strain CFT073 / ATCC 700928 / UPEC) protein is Fructose-6-phosphate aldolase 2 (fsaB).